A 375-amino-acid chain; its full sequence is Succinyl-diaminopimelate desuccinylase (375 aa).

His66 serves as a coordination point for Zn(2+). Asp68 is a catalytic residue. Residue Asp99 participates in Zn(2+) binding. Glu133 (proton acceptor) is an active-site residue. Glu134, Glu162, and His348 together coordinate Zn(2+).

This sequence belongs to the peptidase M20A family. DapE subfamily. As to quaternary structure, homodimer. Requires Zn(2+) as cofactor. Co(2+) is required as a cofactor.

It carries out the reaction N-succinyl-(2S,6S)-2,6-diaminopimelate + H2O = (2S,6S)-2,6-diaminopimelate + succinate. It functions in the pathway amino-acid biosynthesis; L-lysine biosynthesis via DAP pathway; LL-2,6-diaminopimelate from (S)-tetrahydrodipicolinate (succinylase route): step 3/3. Catalyzes the hydrolysis of N-succinyl-L,L-diaminopimelic acid (SDAP), forming succinate and LL-2,6-diaminopimelate (DAP), an intermediate involved in the bacterial biosynthesis of lysine and meso-diaminopimelic acid, an essential component of bacterial cell walls. This is Succinyl-diaminopimelate desuccinylase from Escherichia coli (strain SE11).